We begin with the raw amino-acid sequence, 252 residues long: Chaplin-A (252 aa).

The signal sequence occupies residues 1-20 (MVAAAAATGILSLCGSPALA). In terms of domain architecture, Chaplin 1 spans 31 to 71 (SPGAVSGNALQVPVDVPVNACGNTVDVIAALNPAFGNECEN). 2 disordered regions span residues 71 to 121 (NASD…GNNA) and 150 to 224 (CEND…GSEG). Residues 86–108 (EDASSSSSSSTSASSSGSHADGA) are compositionally biased toward low complexity. Positions 112–152 (SPGVGSGNNAQVPVDVPVNLCGNTVDVIAALNPVFGNKCEN) constitute a Chaplin 2 domain. Residues 153–165 (DAEEPPGYGEEEP) are compositionally biased toward acidic residues. The span at 210–224 (QTEQPPALAETGSEG) shows a compositional bias: low complexity. The short motif at 217-221 (LAETG) is the LPXTG sorting signal element. 2 consecutive propeptides (removed by sortase) follow at residues 219 to 252 (ETGSEGTLGAAAAGAVLIAGGAILYRRGRALSGR) and 221 to 252 (GSEGTLGAAAAGAVLIAGGAILYRRGRALSGR). Position 220 is a pentaglycyl murein peptidoglycan amidated threonine (threonine 220).

Belongs to the chaplin family. Long chaplin subfamily.

It is found in the secreted. The protein localises to the cell wall. Functionally, one of 8 partially redundant surface-active proteins required for efficient formation of aerial mycelium; the short chaplins assemble into a hydrophobic, amyloidal fibrillar surface layer that envelopes and protects aerial hyphae and spores, presumably anchored to the long chaplins. Chaplins have an overlapping function with the surface-active SapB peptide; chaplins are essential on minimal medium while on rich medium both chaplins and SapB are required for efficient aerial hyphae formation. A minimal chaplin strain capable of forming aerial mycelium/hyphae on minimal medium contains ChpC, ChpE and ChpH. The strain also has restored rodlet formation on the hyphae surface. A second minimal chaplin strain with ChpA, ChpD and ChpE makes slightly less robust hyphae. The long chaplins (ChpA, ChpB, ChpC) are not absolutely necessary for short chaplin localization or rodlet formation, but probably play a role in initiating aerial hyphae development. Chaplins are also involved in cell attachment to a hydrophobic surface. The protein is Chaplin-A of Streptomyces coelicolor (strain ATCC BAA-471 / A3(2) / M145).